We begin with the raw amino-acid sequence, 698 residues long: Gametogenetin-binding protein 2 (698 aa).

Residues C555–R575 are disordered.

It localises to the cytoplasm. Its function is as follows. May be involved in spermatogenesis. The polypeptide is Gametogenetin-binding protein 2 (GGNBP2) (Gallus gallus (Chicken)).